Reading from the N-terminus, the 564-residue chain is Iron-sensing transcriptional repressor (564 aa).

The segment at 12 to 36 (CSNCHKTTTSLWRRGPDNSLLCNAC) adopts a GATA-type 1 zinc-finger fold. The disordered stretch occupies residues 100–170 (ASKSQSGRKS…SSPPHEPSVT (71 aa)). Residue S109 is modified to Phosphoserine. Residues 109-120 (SLSPNPSSVPSS) show a composition bias toward low complexity. Positions 135 to 148 (QIVSDTTTETSNGT) are enriched in polar residues. Residues 172–196 (CQNCATTNTPLWRRDESGNPICNAC) form a GATA-type 2 zinc finger. 3 disordered regions span residues 226 to 285 (GNAN…NTGV), 381 to 409 (DSSK…NPLG), and 443 to 496 (LLNP…VQGS). Composition is skewed to polar residues over residues 240 to 253 (SGDS…QSTR), 260 to 271 (SFPNGNGHASGN), 381 to 407 (DSSK…QSNP), and 450 to 486 (PSNS…SPVS).

In terms of assembly, interacts with tup11.

Its subcellular location is the nucleus. With respect to regulation, activated by iron. Its function is as follows. Transcriptional repressor that binds the consensus promoter sequence 5'-[AT]GATAA-3' during iron-replete conditions to down-regulate transcription of target genes. Represses the expression of the iron transporter fio1 in response to high iron concentrations. Also represses the expression of str1, str2 and str3. Represses the expression of shu1 in presence of iron. This chain is Iron-sensing transcriptional repressor, found in Schizosaccharomyces pombe (strain 972 / ATCC 24843) (Fission yeast).